We begin with the raw amino-acid sequence, 120 residues long: Large ribosomal subunit protein bL12 (120 aa).

It belongs to the bacterial ribosomal protein bL12 family. In terms of assembly, homodimer. Part of the ribosomal stalk of the 50S ribosomal subunit. Forms a multimeric L10(L12)X complex, where L10 forms an elongated spine to which 2 to 4 L12 dimers bind in a sequential fashion. Binds GTP-bound translation factors.

Forms part of the ribosomal stalk which helps the ribosome interact with GTP-bound translation factors. Is thus essential for accurate translation. The sequence is that of Large ribosomal subunit protein bL12 from Lachnoclostridium phytofermentans (strain ATCC 700394 / DSM 18823 / ISDg) (Clostridium phytofermentans).